A 275-amino-acid chain; its full sequence is NADH-quinone oxidoreductase subunit E 1 (275 aa).

Cysteine 99, cysteine 104, cysteine 140, and cysteine 144 together coordinate [2Fe-2S] cluster. Positions 200-275 are disordered; it reads LQAPEPVEEK…DKSKPAKKPR (76 aa). Residues 206 to 221 are compositionally biased toward basic and acidic residues; sequence VEEKKSVRASKAKDEQ. Polar residues predominate over residues 231-242; sequence AKPSTATDVTNP. Positions 243 to 256 are enriched in low complexity; the sequence is TLKTPATARKAAAK. A compositionally biased stretch (basic and acidic residues) spans 258-269; sequence VKIEGETVDKSK.

It belongs to the complex I 24 kDa subunit family. The cofactor is [2Fe-2S] cluster.

It carries out the reaction a quinone + NADH + 5 H(+)(in) = a quinol + NAD(+) + 4 H(+)(out). NDH-1 shuttles electrons from NADH, via FMN and iron-sulfur (Fe-S) centers, to quinones in the respiratory chain. The immediate electron acceptor for the enzyme in this species is believed to be ubiquinone. Couples the redox reaction to proton translocation (for every two electrons transferred, four hydrogen ions are translocated across the cytoplasmic membrane), and thus conserves the redox energy in a proton gradient. This Rhizobium meliloti (strain 1021) (Ensifer meliloti) protein is NADH-quinone oxidoreductase subunit E 1 (nuoE1).